The chain runs to 374 residues: N-acetyldiaminopimelate deacetylase (374 aa).

D69 is a catalytic residue. E128 serves as the catalytic Proton acceptor.

The protein belongs to the peptidase M20A family. N-acetyldiaminopimelate deacetylase subfamily.

The catalysed reaction is N-acetyl-(2S,6S)-2,6-diaminopimelate + H2O = (2S,6S)-2,6-diaminopimelate + acetate. The protein operates within amino-acid biosynthesis; L-lysine biosynthesis via DAP pathway; LL-2,6-diaminopimelate from (S)-tetrahydrodipicolinate (acetylase route): step 3/3. Functionally, catalyzes the conversion of N-acetyl-diaminopimelate to diaminopimelate and acetate. This is N-acetyldiaminopimelate deacetylase (ykuR) from Bacillus subtilis (strain 168).